The chain runs to 314 residues: Homoserine O-acetyltransferase (314 aa).

The active-site Acyl-thioester intermediate is the Cys142. Substrate-binding residues include Lys163 and Ser192. Catalysis depends on His235, which acts as the Proton acceptor. The active site involves Glu237. Arg249 contacts substrate.

Belongs to the MetA family.

Its subcellular location is the cytoplasm. It catalyses the reaction L-homoserine + acetyl-CoA = O-acetyl-L-homoserine + CoA. It functions in the pathway amino-acid biosynthesis; L-methionine biosynthesis via de novo pathway; O-acetyl-L-homoserine from L-homoserine: step 1/1. Transfers an acetyl group from acetyl-CoA to L-homoserine, forming acetyl-L-homoserine. This Streptococcus thermophilus (strain ATCC BAA-250 / LMG 18311) protein is Homoserine O-acetyltransferase.